A 1383-amino-acid polypeptide reads, in one-letter code: Negative regulator of sporulation MDS3 (1383 aa).

3 Kelch repeats span residues 124 to 179 (CLYL…SPRF), 199 to 246 (GLFI…KDKE), and 356 to 402 (QNVV…WGGF). Positions 450–460 (GRSNNRTSSFV) are enriched in polar residues. Disordered stretches follow at residues 450–506 (GRSN…VLDA), 625–644 (NQRL…DIPK), 653–825 (LLSS…DLFS), 858–884 (LDSF…SDES), 1063–1114 (NNSR…VDKE), 1251–1289 (QLKE…RLPQ), and 1321–1369 (SMTD…KSSS). A compositionally biased stretch (low complexity) spans 631 to 644 (KSSNSESSSSDIPK). Residues 693 to 707 (VNREEGSDCSKDRKT) are compositionally biased toward basic and acidic residues. 3 stretches are compositionally biased toward low complexity: residues 726 to 758 (NSTS…EQIP), 803 to 815 (ESPF…SMSG), and 858 to 874 (LDSF…VSSV). Residues 1084-1094 (EGEKQEEIVSK) are compositionally biased toward basic and acidic residues. A compositionally biased stretch (low complexity) spans 1251–1280 (QLKESQLQSKSSPIIPTVSTVTPSPLPSIS). The span at 1341–1352 (LQQTMLSRTPTN) shows a compositional bias: polar residues.

As to quaternary structure, interacts with SIT4.

Its subcellular location is the cytoplasm. In terms of biological role, negatively regulates early sporulation-specific genes. TOR signaling pathway component that contributes to morphogenesis as a regulator of this key morphogenetic pathway. Required for growth and hyphal formation at pH 9, for full virulence in a mouse model of systemic infection and for biofilm formation. Involved in chlamydospore formation, distinctive morphological feature of the fungal pathogen C.albicans that can be induced to form in oxygen-limited environments and has been reported in clinical specimens. This chain is Negative regulator of sporulation MDS3 (MDS3), found in Candida albicans (strain SC5314 / ATCC MYA-2876) (Yeast).